Consider the following 46-residue polypeptide: uncharacterized protein (46 aa).

The protein to equivalent protein in phage 82.

This is an uncharacterized protein from Escherichia coli (strain K12).